Reading from the N-terminus, the 307-residue chain is MLILISFTALILFFLAGMNMLRKGLISMAYSKIEERLLLFTDHPLKAFLISIVFTGILQSSSAFMVIVIGFVSAGVLSFKRTIPMILGTNVGSTFTTEFIAIKMDIVIWVLLIGGLLFFLTGRYPLKQLGTSFLGLGIIFFCISGFSHLAGPLTKLKTGADVLYHVNDSNWSALLIGMVLTAIIHSSSVCIGILMSFMNEGIIGLTQAMSVVLGSNIGTCITAVMAAVSGGYAAKQTAYAHVVFNVLGVALVLPFLTAATGFVEQLSPDPAQKIAHFSLLFNVVTALLFLPLTNLFYRLIHLLIPAK.

8 helical membrane passes run 1-21, 52-72, 99-119, 133-153, 174-194, 208-228, 242-262, and 277-297; these read MLILISFTALILFFLAGMNML, IVFTGILQSSSAFMVIVIGFV, FIAIKMDIVIWVLLIGGLLFF, FLGLGIIFFCISGFSHLAGPL, LLIGMVLTAIIHSSSVCIGIL, AMSVVLGSNIGTCITAVMAAV, VVFNVLGVALVLPFLTAATGF, and FSLLFNVVTALLFLPLTNLFY.

It is found in the cell membrane. This is an uncharacterized protein from Bacillus subtilis (strain 168).